A 211-amino-acid chain; its full sequence is MVKKKKEKEKSKEIEEMDREIQNGAYSGRVMTEEQMEILRKQIAVYAVICDQLVLLHNSLSSYHPLSSGVRPMVGGYFDPMGASSSSHRISTRHRWTPTSTQLQILESIYDEGSGTPNRRRIREIATELSEHGQITETNVYNWFQNRRARSKRKQPQTTTANGQADDVAVTTEERRSCGDSGGLESYEHILFPSPDLGIEHLLSIGKFMET.

The segment at residues 91–155 (STRHRWTPTS…NRRARSKRKQ (65 aa)) is a DNA-binding region (homeobox; WUS-type). Positions 147–183 (RRARSKRKQPQTTTANGQADDVAVTTEERRSCGDSGG) are disordered.

It belongs to the WUS homeobox family. In terms of tissue distribution, expressed in root vasculature, pericycle and stamen. Expressed in the procambium during stem maturation.

It localises to the nucleus. Functionally, acts redundantly with WOX4 downstream of the TDR/PXY receptor kinase to regulate procambial cell proliferation and differentiation in vascular tissue, independently of any role in vascular. Involved in the regulation of gibberellin (GA) biosynthesis pathway. Positively regulates the expression of the GA biosynthesis gene GA3OX1, and negatively regulates the expression of GA2OX1 during secondary growth, which increases bioactive GA content in the inflorescence stem. Promotes vascular cell differentiation in the inflorescence stem. In terms of biological role, transcription factor which may be involved in developmental processes. The chain is WUSCHEL-related homeobox 14 (WOX14) from Arabidopsis thaliana (Mouse-ear cress).